A 456-amino-acid chain; its full sequence is Bifunctional protein GlmU (456 aa).

Positions 1-229 (MSNSSMSVVI…LSEVEGVNNR (229 aa)) are pyrophosphorylase. UDP-N-acetyl-alpha-D-glucosamine is bound by residues 11–14 (LAAG), K25, Q76, 81–82 (GT), 103–105 (YGD), G140, E154, N169, and N227. D105 lines the Mg(2+) pocket. N227 provides a ligand contact to Mg(2+). Positions 230 to 250 (LQLAALERVYQSEQAEKLLLA) are linker. The tract at residues 251–456 (GVMLLDPARF…QGWQRPIKKK (206 aa)) is N-acetyltransferase. UDP-N-acetyl-alpha-D-glucosamine-binding residues include R333 and K351. H363 serves as the catalytic Proton acceptor. Positions 366 and 377 each coordinate UDP-N-acetyl-alpha-D-glucosamine. Residues A380, 386–387 (NY), S405, A423, and R440 contribute to the acetyl-CoA site.

The protein in the N-terminal section; belongs to the N-acetylglucosamine-1-phosphate uridyltransferase family. In the C-terminal section; belongs to the transferase hexapeptide repeat family. Homotrimer. Mg(2+) is required as a cofactor.

Its subcellular location is the cytoplasm. The catalysed reaction is alpha-D-glucosamine 1-phosphate + acetyl-CoA = N-acetyl-alpha-D-glucosamine 1-phosphate + CoA + H(+). The enzyme catalyses N-acetyl-alpha-D-glucosamine 1-phosphate + UTP + H(+) = UDP-N-acetyl-alpha-D-glucosamine + diphosphate. The protein operates within nucleotide-sugar biosynthesis; UDP-N-acetyl-alpha-D-glucosamine biosynthesis; N-acetyl-alpha-D-glucosamine 1-phosphate from alpha-D-glucosamine 6-phosphate (route II): step 2/2. It participates in nucleotide-sugar biosynthesis; UDP-N-acetyl-alpha-D-glucosamine biosynthesis; UDP-N-acetyl-alpha-D-glucosamine from N-acetyl-alpha-D-glucosamine 1-phosphate: step 1/1. Its pathway is bacterial outer membrane biogenesis; LPS lipid A biosynthesis. Its function is as follows. Catalyzes the last two sequential reactions in the de novo biosynthetic pathway for UDP-N-acetylglucosamine (UDP-GlcNAc). The C-terminal domain catalyzes the transfer of acetyl group from acetyl coenzyme A to glucosamine-1-phosphate (GlcN-1-P) to produce N-acetylglucosamine-1-phosphate (GlcNAc-1-P), which is converted into UDP-GlcNAc by the transfer of uridine 5-monophosphate (from uridine 5-triphosphate), a reaction catalyzed by the N-terminal domain. The sequence is that of Bifunctional protein GlmU from Yersinia enterocolitica serotype O:8 / biotype 1B (strain NCTC 13174 / 8081).